The following is a 244-amino-acid chain: Phosphoadenosine 5'-phosphosulfate reductase (244 aa).

The Nucleophile; cysteine thiosulfonate intermediate role is filled by cysteine 239.

The protein belongs to the PAPS reductase family. CysH subfamily.

It is found in the cytoplasm. It catalyses the reaction [thioredoxin]-disulfide + sulfite + adenosine 3',5'-bisphosphate + 2 H(+) = [thioredoxin]-dithiol + 3'-phosphoadenylyl sulfate. Its pathway is sulfur metabolism; hydrogen sulfide biosynthesis; sulfite from sulfate: step 3/3. In terms of biological role, catalyzes the formation of sulfite from phosphoadenosine 5'-phosphosulfate (PAPS) using thioredoxin as an electron donor. This chain is Phosphoadenosine 5'-phosphosulfate reductase, found in Serratia proteamaculans (strain 568).